A 119-amino-acid polypeptide reads, in one-letter code: Large ribosomal subunit protein bL20 (119 aa).

This sequence belongs to the bacterial ribosomal protein bL20 family.

Binds directly to 23S ribosomal RNA and is necessary for the in vitro assembly process of the 50S ribosomal subunit. It is not involved in the protein synthesizing functions of that subunit. The chain is Large ribosomal subunit protein bL20 from Acinetobacter baylyi (strain ATCC 33305 / BD413 / ADP1).